Here is a 254-residue protein sequence, read N- to C-terminus: MTSPASSRTILVFDVDGTLTAARQTITPEMREFLIEARKRVPLAIVGGSDFKKITEQLADHDKDLLLSLFDYTFSENGLYGFKGTEPYPVQSIQKAIGDAKLQELINFALRYMSDIQLPVKRGNFVEFRNGMINLSPIGRSCSQEERMQFVEFDKKHGIRQKFTEQLREKFGQYGLQFAIGGQISVDVFPTGWDKTFCLQYLVPDFDTIHFFGDKTAPGGNDHEIFADERTVGHTVEGPEDTRKHVENVLKELD.

Aspartate 14 functions as the Nucleophile in the catalytic mechanism. 2 residues coordinate Mg(2+): aspartate 14 and aspartate 16. The active-site Proton donor/acceptor is the aspartate 16. Residues arginine 23, arginine 129, arginine 140, arginine 147, serine 185, and aspartate 187 each contribute to the alpha-D-mannose 1-phosphate site. Mg(2+) contacts are provided by aspartate 214, phenylalanine 226, aspartate 228, and threonine 231.

This sequence belongs to the eukaryotic PMM family. Homodimer.

The protein localises to the cytoplasm. The enzyme catalyses alpha-D-mannose 1-phosphate = D-mannose 6-phosphate. The protein operates within nucleotide-sugar biosynthesis; GDP-alpha-D-mannose biosynthesis; alpha-D-mannose 1-phosphate from D-fructose 6-phosphate: step 2/2. In terms of biological role, involved in the synthesis of the GDP-mannose and dolichol-phosphate-mannose required for a number of critical mannosyl transfer reactions. In Caenorhabditis elegans, this protein is Probable phosphomannomutase.